The sequence spans 244 residues: 5-oxoprolinase subunit A (244 aa).

Belongs to the LamB/PxpA family. Forms a complex composed of PxpA, PxpB and PxpC.

The catalysed reaction is 5-oxo-L-proline + ATP + 2 H2O = L-glutamate + ADP + phosphate + H(+). In terms of biological role, catalyzes the cleavage of 5-oxoproline to form L-glutamate coupled to the hydrolysis of ATP to ADP and inorganic phosphate. The protein is 5-oxoprolinase subunit A of Salmonella heidelberg (strain SL476).